The sequence spans 614 residues: DNA repair protein rad26 (614 aa).

Residues 29-43 are compositionally biased toward low complexity; the sequence is QAQTQVQAQSSQVVV. Disordered stretches follow at residues 29-76 and 157-214; these read QAQT…QASL and KKMK…TAED. Polar residues-rich tracts occupy residues 50–76 and 181–190; these read QNLN…QASL and LLSSSDQLAK. A compositionally biased stretch (basic residues) spans 191–207; that stretch reads STKHAAKNSPSKKKRKT.

In terms of assembly, interacts with cds1.

It localises to the nucleus. Its function is as follows. Involved in cell cycle arrest when DNA synthesis is inhibited by hydroxyurea, and in mitosis arrest after treatment with DNA-damaging agents. This protein is S phase-specific. The polypeptide is DNA repair protein rad26 (rad26) (Schizosaccharomyces pombe (strain 972 / ATCC 24843) (Fission yeast)).